The primary structure comprises 700 residues: Suprabasin (700 aa).

The first 23 residues, 1-23, serve as a signal peptide directing secretion; sequence MYLVSLLSSCCLLVLLGTLPARA. Disordered stretches follow at residues 133–158, 183–258, and 283–391; these read QGGS…VANK, HAFG…VADK, and HAFG…GAHH. The stretch at 488–546 forms a coiled coil; it reads KEAEKVAHGVQNGVNQAQKEAEKVAHGVQNGVNQAQKEAEKVAHGVQNGVNQAQKEAEK. The segment covering 641–654 has biased composition (polar residues); the sequence is GVNQPSKEANQLLN. The disordered stretch occupies residues 641 to 669; that stretch reads GVNQPSKEANQLLNGSHQGQGGYGGQHGG. The segment covering 658–668 has biased composition (gly residues); the sequence is QGQGGYGGQHG.

As to expression, detected in epidermis, in suprabasal keratinocytes. Detected in suprabasal layers of embryonic epidermis and in stratified layers of embryonic tongue and palate. Detected in adult stomach.

It is found in the secreted. In Mus musculus (Mouse), this protein is Suprabasin (Sbsn).